A 274-amino-acid polypeptide reads, in one-letter code: Rhamnulose-1-phosphate aldolase (274 aa).

Glutamate 117 is a catalytic residue. Residues histidine 141, histidine 143, and histidine 212 each coordinate Zn(2+).

The protein belongs to the aldolase class II family. RhaD subfamily. As to quaternary structure, homotetramer. Requires Zn(2+) as cofactor.

It is found in the cytoplasm. The enzyme catalyses L-rhamnulose 1-phosphate = (S)-lactaldehyde + dihydroxyacetone phosphate. It participates in carbohydrate degradation; L-rhamnose degradation; glycerone phosphate from L-rhamnose: step 3/3. Catalyzes the reversible cleavage of L-rhamnulose-1-phosphate to dihydroxyacetone phosphate (DHAP) and L-lactaldehyde. This chain is Rhamnulose-1-phosphate aldolase, found in Pectobacterium carotovorum subsp. carotovorum (strain PC1).